Reading from the N-terminus, the 351-residue chain is Adenine deaminase (351 aa).

Histidine 20, histidine 22, and histidine 200 together coordinate Zn(2+). The active-site Proton donor is the glutamate 203. Aspartate 281 contributes to the Zn(2+) binding site. Aspartate 282 lines the substrate pocket.

This sequence belongs to the metallo-dependent hydrolases superfamily. Adenosine and AMP deaminases family. Adenine deaminase type 2 subfamily. Zn(2+) is required as a cofactor.

The enzyme catalyses adenine + H2O + H(+) = hypoxanthine + NH4(+). Its function is as follows. Catalyzes the hydrolytic deamination of adenine to hypoxanthine. Plays an important role in the purine salvage pathway and in nitrogen catabolism. This is Adenine deaminase from Cupriavidus necator (strain ATCC 17699 / DSM 428 / KCTC 22496 / NCIMB 10442 / H16 / Stanier 337) (Ralstonia eutropha).